The following is a 917-amino-acid chain: Hexokinase-2 (917 aa).

Methionine 1 carries the N-acetylmethionine modification. Residues 1 to 16 (MIASHMIACLFTELNQ) form a mitochondrial-binding peptide (MBP) region. 2 consecutive Hexokinase domains span residues 16 to 458 (QNQV…MVTA) and 464 to 906 (ADQH…LITA). Residues arginine 30 and 84–89 (DLGGTN) each bind ATP. The hexokinase small subdomain 1 stretch occupies residues 73-207 (DGTEHGEFLA…DFDIDIVAVV (135 aa)). Position 84–88 (84–88 (DLGGT)) interacts with D-glucose 6-phosphate. Residues 155-156 (SF), 172-173 (TK), and 208-209 (ND) each bind D-glucose. The tract at residues 208-447 (NDTVGTMMTC…CDVRFLRSED (240 aa)) is hexokinase large subdomain 1. Residues aspartate 209 and threonine 232 each contribute to the D-glucose 6-phosphate site. D-glucose-binding positions include asparagine 235, glutamate 260, and 291 to 294 (QLFE). 413 to 415 (DGS) provides a ligand contact to D-glucose 6-phosphate. 425 to 426 (KR) serves as a coordination point for ATP. D-glucose 6-phosphate-binding positions include serine 449 and 532–536 (DLGGT). The interval 521-655 (DGTEKGDFLA…EFDLDVVAVV (135 aa)) is hexokinase small subdomain 2. Residue 532-537 (DLGGTN) coordinates ATP. D-glucose is bound by residues 603–604 (SF), 620–621 (TK), and 656–657 (ND). The tract at residues 656 to 895 (NDTVGTMMTC…CDVSFLESED (240 aa)) is hexokinase large subdomain 2. 2 residues coordinate D-glucose 6-phosphate: aspartate 657 and threonine 680. Residue threonine 680 coordinates ATP. Residues 682-683 (SN), glutamate 708, and 739-742 (QRFE) contribute to the D-glucose site. ATP is bound by residues 747–748 (GM), 784–788 (TKFLS), and 863–867 (TLYKL). D-glucose 6-phosphate contacts are provided by residues 861 to 863 (DGT) and serine 897.

It belongs to the hexokinase family. In terms of assembly, monomer. Interacts with TIGAR; the interaction increases hexokinase activity in a hypoxia- and HIF1A-dependent manner.

It localises to the mitochondrion outer membrane. It is found in the cytoplasm. The protein resides in the cytosol. The enzyme catalyses a D-hexose + ATP = a D-hexose 6-phosphate + ADP + H(+). The catalysed reaction is D-fructose + ATP = D-fructose 6-phosphate + ADP + H(+). It catalyses the reaction D-glucose + ATP = D-glucose 6-phosphate + ADP + H(+). The protein operates within carbohydrate metabolism; hexose metabolism. Its pathway is carbohydrate degradation; glycolysis; D-glyceraldehyde 3-phosphate and glycerone phosphate from D-glucose: step 1/4. Hexokinase activity is specifically inhibited by 2,6-disubstituted glucosamines. Catalyzes the phosphorylation of hexose, such as D-glucose and D-fructose, to hexose 6-phosphate (D-glucose 6-phosphate and D-fructose 6-phosphate, respectively). Mediates the initial step of glycolysis by catalyzing phosphorylation of D-glucose to D-glucose 6-phosphate. Plays a key role in maintaining the integrity of the outer mitochondrial membrane by preventing the release of apoptogenic molecules from the intermembrane space and subsequent apoptosis. The protein is Hexokinase-2 of Rattus norvegicus (Rat).